The chain runs to 371 residues: tRNA N6-adenosine threonylcarbamoyltransferase (371 aa).

Fe cation-binding residues include His110 and His114. Substrate contacts are provided by residues 132-136, Asp165, Gly178, Asp182, and Asn289; that span reads LVSGG. Asp317 is a Fe cation binding site.

Belongs to the KAE1 / TsaD family. Requires Fe(2+) as cofactor.

Its subcellular location is the cytoplasm. The catalysed reaction is L-threonylcarbamoyladenylate + adenosine(37) in tRNA = N(6)-L-threonylcarbamoyladenosine(37) in tRNA + AMP + H(+). Functionally, required for the formation of a threonylcarbamoyl group on adenosine at position 37 (t(6)A37) in tRNAs that read codons beginning with adenine. Is involved in the transfer of the threonylcarbamoyl moiety of threonylcarbamoyl-AMP (TC-AMP) to the N6 group of A37, together with TsaE and TsaB. TsaD likely plays a direct catalytic role in this reaction. The sequence is that of tRNA N6-adenosine threonylcarbamoyltransferase from Solidesulfovibrio magneticus (strain ATCC 700980 / DSM 13731 / RS-1) (Desulfovibrio magneticus).